A 359-amino-acid chain; its full sequence is Nicotinate-nucleotide--dimethylbenzimidazole phosphoribosyltransferase (359 aa).

Catalysis depends on E318, which acts as the Proton acceptor.

The protein belongs to the CobT family. Homodimer.

The enzyme catalyses 5,6-dimethylbenzimidazole + nicotinate beta-D-ribonucleotide = alpha-ribazole 5'-phosphate + nicotinate + H(+). It functions in the pathway nucleoside biosynthesis; alpha-ribazole biosynthesis; alpha-ribazole from 5,6-dimethylbenzimidazole: step 1/2. Functionally, catalyzes the synthesis of alpha-ribazole-5'-phosphate from nicotinate mononucleotide (NAMN) and 5,6-dimethylbenzimidazole (DMB). The sequence is that of Nicotinate-nucleotide--dimethylbenzimidazole phosphoribosyltransferase from Escherichia coli O81 (strain ED1a).